We begin with the raw amino-acid sequence, 633 residues long: Probable potassium transport system protein Kup 3 (633 aa).

11 helical membrane-spanning segments follow: residues 61-81, 107-127, 143-163, 173-193, 211-231, 255-275, 287-307, 345-365, 371-391, 402-422, and 427-447; these read LVSL…VLFL, PVLM…DAMI, VAPA…LLLF, VSVF…AAGV, AIGF…AIFL, WFAV…ALVL, LMFP…GTII, IYLP…MLMF, LAPA…ILAF, ALTA…FLGA, and IHHG…MMWT.

This sequence belongs to the HAK/KUP transporter (TC 2.A.72) family.

The protein localises to the cell inner membrane. It carries out the reaction K(+)(in) + H(+)(in) = K(+)(out) + H(+)(out). Its function is as follows. Transport of potassium into the cell. Likely operates as a K(+):H(+) symporter. In Sinorhizobium medicae (strain WSM419) (Ensifer medicae), this protein is Probable potassium transport system protein Kup 3.